A 539-amino-acid chain; its full sequence is Beta-apo-4'-carotenal oxygenase (539 aa).

Catalysis depends on residues E228 and C262.

It belongs to the aldehyde dehydrogenase family.

It catalyses the reaction 4'-apo-beta-carotenal + NAD(+) + H2O = neurosporaxanthin + NADH + 2 H(+). Beta-apo-4'-carotenal oxygenase involved in the last step of synthesis of neurosporaxanthin, a carboxylic apocarotenoid acting as an essential protective pigments and leading to orange pigmentation. Converts the aldehyde beta-apo-4'-carotenal into neurosporaxanthin. Is also able to use shorter apocarotenals as substrates (such as beta-apo-8'-carotenal (C30), beta-apo-10'-carotenal (C27), or the acyclic apocarotenal apo-8'-lycopenal (C30)), indicating wide substrate specificity. Neurosporaxanthin is synthesized from geranyl-geranyl pyrophosphate (GGPP) through several enzymatic activities. Phytoene synthase activity performed by the bifunctional enzyme carAR first produces phytoene from geranyl-geranyl pyrophosphate (GGPP). The phytoene dehydrogenase carB then introduces 4 desaturations to lead to lycopene which is substrate of the carotene cyclase activity of carAR that leads to the production of gamma-carotene. CarB then performs a 5th desaturation reaction to yield torulene. Torulene is the substrate of the dioxidase carT that breaks the molecule, removing five carbon atoms to yield beta-apo-4'-carotenal, whereas the aldehyde dehydrogenase carD mediates the last step by converting beta-apo-4'-carotenal into neurosporaxanthin. The protein is Beta-apo-4'-carotenal oxygenase of Gibberella fujikuroi (strain CBS 195.34 / IMI 58289 / NRRL A-6831) (Bakanae and foot rot disease fungus).